A 144-amino-acid polypeptide reads, in one-letter code: Nucleoside diphosphate kinase (144 aa).

ATP contacts are provided by K11, F59, R87, T93, R104, and N114. The active-site Pros-phosphohistidine intermediate is the H117.

This sequence belongs to the NDK family. As to quaternary structure, homotetramer. Requires Mg(2+) as cofactor.

Its subcellular location is the cytoplasm. It catalyses the reaction a 2'-deoxyribonucleoside 5'-diphosphate + ATP = a 2'-deoxyribonucleoside 5'-triphosphate + ADP. It carries out the reaction a ribonucleoside 5'-diphosphate + ATP = a ribonucleoside 5'-triphosphate + ADP. Major role in the synthesis of nucleoside triphosphates other than ATP. The ATP gamma phosphate is transferred to the NDP beta phosphate via a ping-pong mechanism, using a phosphorylated active-site intermediate. This Aliivibrio fischeri (strain MJ11) (Vibrio fischeri) protein is Nucleoside diphosphate kinase.